Here is a 212-residue protein sequence, read N- to C-terminus: Probable NADH dehydrogenase [ubiquinone] iron-sulfur protein 8, mitochondrial (212 aa).

4Fe-4S ferredoxin-type domains lie at 104 to 133 (RRYPSGEERCIACKLCEAICPAQAITIEAE) and 143 to 172 (TRYDIDMTKCIYCGLCQEACPVDAIVEGPN). [4Fe-4S] cluster-binding residues include Cys-113, Cys-116, Cys-119, Cys-123, Cys-152, Cys-155, Cys-158, and Cys-162.

The protein belongs to the complex I 23 kDa subunit family. As to quaternary structure, complex I is composed of 45 different subunits This is a component of the iron-sulfur (IP) fragment of the enzyme. The cofactor is [4Fe-4S] cluster.

Its subcellular location is the mitochondrion. The catalysed reaction is a ubiquinone + NADH + 5 H(+)(in) = a ubiquinol + NAD(+) + 4 H(+)(out). Core subunit of the mitochondrial membrane respiratory chain NADH dehydrogenase (Complex I) that is believed to belong to the minimal assembly required for catalysis. Complex I functions in the transfer of electrons from NADH to the respiratory chain. The immediate electron acceptor for the enzyme is believed to be ubiquinone. The polypeptide is Probable NADH dehydrogenase [ubiquinone] iron-sulfur protein 8, mitochondrial (Caenorhabditis elegans).